Reading from the N-terminus, the 95-residue chain is Aspartyl/glutamyl-tRNA(Asn/Gln) amidotransferase subunit C (95 aa).

The protein belongs to the GatC family. Heterotrimer of A, B and C subunits.

It catalyses the reaction L-glutamyl-tRNA(Gln) + L-glutamine + ATP + H2O = L-glutaminyl-tRNA(Gln) + L-glutamate + ADP + phosphate + H(+). The catalysed reaction is L-aspartyl-tRNA(Asn) + L-glutamine + ATP + H2O = L-asparaginyl-tRNA(Asn) + L-glutamate + ADP + phosphate + 2 H(+). Functionally, allows the formation of correctly charged Asn-tRNA(Asn) or Gln-tRNA(Gln) through the transamidation of misacylated Asp-tRNA(Asn) or Glu-tRNA(Gln) in organisms which lack either or both of asparaginyl-tRNA or glutaminyl-tRNA synthetases. The reaction takes place in the presence of glutamine and ATP through an activated phospho-Asp-tRNA(Asn) or phospho-Glu-tRNA(Gln). The chain is Aspartyl/glutamyl-tRNA(Asn/Gln) amidotransferase subunit C from Nitrobacter winogradskyi (strain ATCC 25391 / DSM 10237 / CIP 104748 / NCIMB 11846 / Nb-255).